Here is a 99-residue protein sequence, read N- to C-terminus: Ribonuclease P protein component 1 (99 aa).

Belongs to the eukaryotic/archaeal RNase P protein component 1 family. As to quaternary structure, consists of a catalytic RNA component and at least 4-5 protein subunits.

The protein resides in the cytoplasm. It carries out the reaction Endonucleolytic cleavage of RNA, removing 5'-extranucleotides from tRNA precursor.. In terms of biological role, part of ribonuclease P, a protein complex that generates mature tRNA molecules by cleaving their 5'-ends. The polypeptide is Ribonuclease P protein component 1 (Methanococcus vannielii).